The chain runs to 125 residues: C-X-C motif chemokine 9 (125 aa).

Positions 1 to 22 (MKKSGVLFLLGIILLVLIGVQG) are cleaved as a signal peptide. Intrachain disulfides connect Cys31–Cys58 and Cys33–Cys74. Positions 93–125 (VSQKKKQKNGKKHQKKKVLKVRKSQRSRQKKTT) are disordered. A compositionally biased stretch (basic residues) spans 94–125 (SQKKKQKNGKKHQKKKVLKVRKSQRSRQKKTT).

It belongs to the intercrine alpha (chemokine CxC) family.

Its subcellular location is the secreted. Cytokine that affects the growth, movement, or activation state of cells that participate in immune and inflammatory response. Chemotactic for activated T-cells. Binds to CXCR3. This is C-X-C motif chemokine 9 (CXCL9) from Homo sapiens (Human).